Reading from the N-terminus, the 211-residue chain is UPF0319 protein VC_A0026 (211 aa).

The N-terminal stretch at 1 to 21 (MKPMQRLTCLLALCFAASASA) is a signal peptide.

Belongs to the UPF0319 family.

This Vibrio cholerae serotype O1 (strain ATCC 39315 / El Tor Inaba N16961) protein is UPF0319 protein VC_A0026.